A 396-amino-acid chain; its full sequence is Enoyl-[acyl-carrier-protein] reductase [NADH] (396 aa).

Residues G47–F52, F73–E74, D110–A111, and L138–A139 contribute to the NAD(+) site. Y224 provides a ligand contact to substrate. The active-site Proton donor is Y234. NAD(+) is bound by residues K243 and L272–T274.

Belongs to the TER reductase family. In terms of assembly, monomer.

The enzyme catalyses a 2,3-saturated acyl-[ACP] + NAD(+) = a (2E)-enoyl-[ACP] + NADH + H(+). Its pathway is lipid metabolism; fatty acid biosynthesis. Its function is as follows. Involved in the final reduction of the elongation cycle of fatty acid synthesis (FAS II). Catalyzes the reduction of a carbon-carbon double bond in an enoyl moiety that is covalently linked to an acyl carrier protein (ACP). This is Enoyl-[acyl-carrier-protein] reductase [NADH] from Flavobacterium johnsoniae (strain ATCC 17061 / DSM 2064 / JCM 8514 / BCRC 14874 / CCUG 350202 / NBRC 14942 / NCIMB 11054 / UW101) (Cytophaga johnsonae).